Reading from the N-terminus, the 533-residue chain is Lysine--tRNA ligase 1 (533 aa).

The 'HIGH' region signature appears at 26–34 (PSGHIHIGN). The short motif at 272–276 (AMSSS) is the 'KMSKS' region element.

It belongs to the class-I aminoacyl-tRNA synthetase family.

It is found in the cytoplasm. It carries out the reaction tRNA(Lys) + L-lysine + ATP = L-lysyl-tRNA(Lys) + AMP + diphosphate. The sequence is that of Lysine--tRNA ligase 1 from Methanosarcina acetivorans (strain ATCC 35395 / DSM 2834 / JCM 12185 / C2A).